The sequence spans 545 residues: CWF19-like protein 1 homolog (545 aa).

The tract at residues 306-329 is disordered; the sequence is YFYDMDGGRRKRQGGDNNKRDKRP.

It belongs to the CWF19 family.

The protein is CWF19-like protein 1 homolog of Drosophila melanogaster (Fruit fly).